Consider the following 151-residue polypeptide: Regulatory protein RecX (151 aa).

The protein belongs to the RecX family.

Its subcellular location is the cytoplasm. Functionally, modulates RecA activity. This is Regulatory protein RecX from Herminiimonas arsenicoxydans.